A 598-amino-acid polypeptide reads, in one-letter code: Insulin-like growth factor 2 mRNA-binding protein 1 (598 aa).

2 RRM domains span residues 2–75 (NKLY…HSVP) and 81–156 (RKLQ…YIPD). The disordered stretch occupies residues 155–195 (PDENSEVDSQRGPDNGRRPGYGPRGTSRQMSPGSGIPSKHQ). A compositionally biased stretch (basic and acidic residues) spans 162 to 171 (DSQRGPDNGR). Serine 185 bears the Phosphoserine mark. KH domains lie at 198–263 (DIPL…CRMI) and 279–346 (EVPL…EQEI). Tyrosine 399 carries the phosphotyrosine modification. KH domains are found at residues 407 to 472 (QETV…QGRI) and 489 to 555 (KLET…QRKI). Positions 561–598 (QVKQQQKGGGMGTPQGPHPQGMTELGSPQGLAQEPRRK) are disordered. A phosphothreonine mark is found at threonine 573 and threonine 583. Residues 574–583 (PQGPHPQGMT) show a composition bias toward low complexity. Serine 587 carries the post-translational modification Phosphoserine.

Belongs to the RRM IMP/VICKZ family. As to quaternary structure, component of the CRD-mediated complex.

The protein localises to the nucleus. The protein resides in the cytoplasm. It localises to the perinuclear region. It is found in the P-body. Its subcellular location is the stress granule. The protein localises to the cell projection. The protein resides in the growth cone. It localises to the filopodium. It is found in the lamellipodium. Functionally, RNA-binding factor that recruits target transcripts to cytoplasmic protein-RNA complexes (mRNPs). This transcript 'caging' into mRNPs allows mRNA transport and transient storage. It also modulates the rate and location at which target transcripts encounter the translational apparatus and shields them from endonuclease attacks or microRNA-mediated degradation. Preferentially binds to N6-methyladenosine (m6A)-containing mRNAs and increases their stability. Plays a direct role in the transport and translation of transcripts required for axonal regeneration in adult sensory neurons. Regulates localized beta-actin/ACTB mRNA translation in polarized cells, a crucial process for cell migration and neurite outgrowth. Promotes the directed movement of cells by fine-tuning intracellular signaling networks and enhances the velocity of cell migration. The sequence is that of Insulin-like growth factor 2 mRNA-binding protein 1 (igf2bp1) from Danio rerio (Zebrafish).